We begin with the raw amino-acid sequence, 129 residues long: uncharacterized protein (129 aa).

This is an uncharacterized protein from Clostridium perfringens (strain 13 / Type A).